Here is a 206-residue protein sequence, read N- to C-terminus: MDEDVLTTLKILIIGESGVGKSSLLLRFTDDTFDPELAATIGVDFKVKTISVDGNKAKLAIWDTAGQERFRTLTPSYYRGAQGVILVYDVTRRDTFVKLDNWLNELETYCTRNDIVNMLVGNKIDKENREVDRNEGLKFARKHSMLFIEASAKTCDGVQCAFEELVEKIIQTPGLWESENQNKGVKLSPREESHGGGACGGYCSVL.

M1 carries the post-translational modification N-acetylmethionine. 11 residues coordinate GTP: S17, G20, K21, S22, S23, D34, P35, T40, G66, K123, and D125. S22 provides a ligand contact to Mg(2+). Short sequence motifs (switch) lie at residues 31–45 (DTFDPELAATIGVDF) and 63–80 (DTAGQERFRTLTPSYYRG). T40 contributes to the Mg(2+) binding site. At S144 the chain carries Phosphoserine. A152 lines the GTP pocket. The S-palmitoyl cysteine moiety is linked to residue C199. The residue at position 203 (C203) is a Cysteine methyl ester. C203 carries S-geranylgeranyl cysteine lipidation. Positions 204–206 (SVL) are cleaved as a propeptide — removed in mature form.

This sequence belongs to the small GTPase superfamily. Rab family. Interacts (in GTP-bound form) with ZFYVE1. Interacts with ZW10 and this interaction is enhanced in the presence of ZFYVE1. Interacts with BSCL2. The cofactor is Mg(2+).

It localises to the endoplasmic reticulum membrane. The protein localises to the golgi apparatus. It is found in the cis-Golgi network membrane. Its subcellular location is the lipid droplet. The protein resides in the apical cell membrane. It catalyses the reaction GTP + H2O = GDP + phosphate + H(+). Regulated by guanine nucleotide exchange factors (GEFs) which promote the exchange of bound GDP for free GTP. Regulated by GTPase activating proteins (GAPs) which increase the GTP hydrolysis activity at the ER membrane. Inhibited by GDP dissociation inhibitors (GDIs) which prevent Rab-GDP dissociation. The small GTPases Rab are key regulators of intracellular membrane trafficking, from the formation of transport vesicles to their fusion with membranes. Rabs cycle between an inactive GDP-bound form and an active GTP-bound form that is able to recruit to membranes different sets of downstream effectors directly responsible for vesicle formation, movement, tethering and fusion. RAB18 is required for the localization of ZFYVE1 to lipid droplets and for its function in mediating the formation of endoplasmic reticulum-lipid droplets (ER-LD) contacts. Also required for maintaining endoplasmic reticulum structure. Plays a role in apical endocytosis/recycling. Plays a key role in eye and brain development and neurodegeneration. This chain is Ras-related protein Rab-18, found in Rattus norvegicus (Rat).